Consider the following 857-residue polypeptide: Bifunctional uridylyltransferase/uridylyl-removing enzyme (857 aa).

A uridylyltransferase region spans residues 1–322 (MDTTPELLLC…FPSESMVTRE (322 aa)). A uridylyl-removing region spans residues 323–679 (INDRFVERQG…ARISPAGEGL (357 aa)). Positions 441 to 563 (VDQHILMVVR…VGNGRYLTAL (123 aa)) constitute an HD domain. ACT domains follow at residues 680–760 (QVAV…DPTQ) and 788–857 (LLSV…ALAI).

It belongs to the GlnD family. Requires Mg(2+) as cofactor.

The enzyme catalyses [protein-PII]-L-tyrosine + UTP = [protein-PII]-uridylyl-L-tyrosine + diphosphate. The catalysed reaction is [protein-PII]-uridylyl-L-tyrosine + H2O = [protein-PII]-L-tyrosine + UMP + H(+). Uridylyltransferase (UTase) activity is inhibited by glutamine, while glutamine activates uridylyl-removing (UR) activity. Its function is as follows. Modifies, by uridylylation and deuridylylation, the PII regulatory proteins (GlnB and homologs), in response to the nitrogen status of the cell that GlnD senses through the glutamine level. Under low glutamine levels, catalyzes the conversion of the PII proteins and UTP to PII-UMP and PPi, while under higher glutamine levels, GlnD hydrolyzes PII-UMP to PII and UMP (deuridylylation). Thus, controls uridylylation state and activity of the PII proteins, and plays an important role in the regulation of nitrogen assimilation and metabolism. The protein is Bifunctional uridylyltransferase/uridylyl-removing enzyme of Cupriavidus metallidurans (strain ATCC 43123 / DSM 2839 / NBRC 102507 / CH34) (Ralstonia metallidurans).